Reading from the N-terminus, the 441-residue chain is Maltokinase (441 aa).

The protein belongs to the aminoglycoside phosphotransferase family. Monomer.

The catalysed reaction is D-maltose + ATP = alpha-maltose 1-phosphate + ADP + H(+). Its pathway is glycan biosynthesis; glycogen biosynthesis. Functionally, catalyzes the ATP-dependent phosphorylation of maltose to maltose 1-phosphate. Is involved in a branched alpha-glucan biosynthetic pathway from trehalose, together with TreS, GlgE and GlgB. The chain is Maltokinase (mak) from Mycolicibacterium vanbaalenii (strain DSM 7251 / JCM 13017 / BCRC 16820 / KCTC 9966 / NRRL B-24157 / PYR-1) (Mycobacterium vanbaalenii).